The sequence spans 254 residues: Cell division protein DivIB (254 aa).

Residues 1–21 (MPNAQIPVLKKNRTKKRTSRK) are Cytoplasmic-facing. The chain crosses the membrane as a helical span at residues 22-42 (IAILLILLFIVLLAVLFFRSS). The Extracellular portion of the chain corresponds to 43 to 254 (LSRVSEIRFD…EEGQEKDTTQ (212 aa)). The 69-residue stretch at 44 to 112 (SRVSEIRFDG…GIIAIHIKEF (69 aa)) folds into the POTRA domain.

Belongs to the FtsQ/DivIB family. DivIB subfamily.

The protein resides in the cell membrane. Its function is as follows. Cell division protein that may be involved in stabilizing or promoting the assembly of the division complex. In Paenibacillus polymyxa (strain E681), this protein is Cell division protein DivIB.